The following is a 412-amino-acid chain: Palmitoyltransferase swf1 (412 aa).

Over 1-2 (MG) the chain is Lumenal. A helical membrane pass occupies residues 3-23 (LLRTIALVILGFSAFIFTVLF). Residues 24-78 (GRLPVFRKTPIGLLHRIIWLHIPHGISYIDARLFNGRILRSWGQAGNYILYENHP) are Cytoplasmic-facing. The chain crosses the membrane as a helical span at residues 79-99 (LVLIFFTTILVIGELIFIPSA). The Lumenal segment spans residues 100-107 (WPRISVMH). A helical membrane pass occupies residues 108–128 (QLYIPIIIALPYYFLYVSVVT). Residues 129 to 198 (KSYITPDNHA…TNCVGLNNYH (70 aa)) are Cytoplasmic-facing. The region spanning 155–205 (HSCETCHFLKPARSKHCSYCKRCVSRQDHHCIWLTNCVGLNNYHYFLYLLL) is the DHHC domain. The chain crosses the membrane as a helical span at residues 199–219 (YFLYLLLSLSVMLTYGSWLGY). The Lumenal segment spans residues 220 to 265 (SLLSQTLDRLIPPSSPVRLRKQSWPTFLNMWAAVVAYDTRIGGVTM). A helical membrane pass occupies residues 266 to 286 (LMFMTAPLAFAFLVYHVYLIW). Residues 287–412 (AGMTTNESAK…NYAAGKAHRA (126 aa)) lie on the Cytoplasmic side of the membrane.

The protein belongs to the DHHC palmitoyltransferase family. SWF1 subfamily.

The protein localises to the endoplasmic reticulum membrane. The enzyme catalyses L-cysteinyl-[protein] + hexadecanoyl-CoA = S-hexadecanoyl-L-cysteinyl-[protein] + CoA. Functionally, palmitoyltransferase that targets several endosomal SNAREs. Palmitoylates the SNAREs at cysteine residues close to the cytoplasmic end of their transmembrane domain. May have a role in the cellular quality control of transmembrane domain-containing proteins. This Emericella nidulans (strain FGSC A4 / ATCC 38163 / CBS 112.46 / NRRL 194 / M139) (Aspergillus nidulans) protein is Palmitoyltransferase swf1 (swf1).